A 106-amino-acid chain; its full sequence is Large ribosomal subunit protein eL36 (106 aa).

Positions 75 to 93 (VRQEKVGHSQESKEEERGD) are enriched in basic and acidic residues. Positions 75 to 106 (VRQEKVGHSQESKEEERGDVQCSPPDEGWWWY) are disordered.

This sequence belongs to the eukaryotic ribosomal protein eL36 family.

The chain is Large ribosomal subunit protein eL36 (RPL36) from Daucus carota (Wild carrot).